An 853-amino-acid polypeptide reads, in one-letter code: Aryl hydrocarbon receptor (853 aa).

Positions 1-9 (MSSGANITY) are excised as a propeptide. Residues 1–38 (MSSGANITYASRKRRKPVQKTVKPVPAEGIKSNPSKRH) are disordered. 2 short sequence motifs (nuclear localization signal) span residues 12-15 (RKRR) and 36-41 (KRHRDR). The 54-residue stretch at 26-79 (PAEGIKSNPSKRHRDRLNTELDRLASLLPFPQDVINKLDKLSVLRLSVSYLRAK) folds into the bHLH domain. Residues 37-65 (RHRDRLNTELDRLASLLPFPQDVINKLDK) are DNA-binding. 3 required for maintaining the overall integrity of the AHR:ARNT heterodimer and its transcriptional activity regions span residues 49-81 (LASL…AKSF), 116-124 (LLQALNGFV), and 264-266 (FAI). The Nuclear export signal signature appears at 63 to 71 (LDKLSVLRL). Residues 116–179 (LLQALNGFVL…RQLHWALNPS (64 aa)) enclose the PAS 1 domain. The PAS 2 domain maps to 273–340 (PSILEIRTKN…CAESHIRMIK (68 aa)). The region spanning 346-384 (MTVFRLLAKHSRWRWVQSNARLIYRNGRPDYIIATQRPL) is the PAC domain. The tract at residues 429–451 (TKSNTSRKDWAPQSTPSKDSFHP) is disordered. Positions 440–451 (PQSTPSKDSFHP) are enriched in polar residues.

As to quaternary structure, homodimer. Heterodimer; efficient DNA binding requires dimerization with another bHLH protein. Interacts with ARNT; the heterodimer ARNT:AHR binds to core DNA sequence 5'-TGCGTG-3' within the dioxin response element (DRE) of target gene promoters and activates their transcription. Binds MYBBP1A. Interacts with coactivators including SRC-1, RIP140 and NOCA7, and with the corepressor SMRT. Interacts with NEDD8 and IVNS1ABP. Interacts with BMAL1. Interacts with HSP90AB1. Interacts with TIPARP; leading to mono-ADP-ribosylation of AHR and subsequent inhibition of AHR. In terms of processing, mono-ADP-ribosylated, leading to inhibit transcription activator activity of AHR. As to expression, expressed in all tissues tested including brain, heart, kidney, liver, lung, spleen, skeletal muscle and thymus.

The protein localises to the cytoplasm. It localises to the nucleus. In terms of biological role, ligand-activated transcription factor that enables cells to adapt to changing conditions by sensing compounds from the environment, diet, microbiome and cellular metabolism, and which plays important roles in development, immunity and cancer. Upon ligand binding, translocates into the nucleus, where it heterodimerizes with ARNT and induces transcription by binding to xenobiotic response elements (XRE). Regulates a variety of biological processes, including angiogenesis, hematopoiesis, drug and lipid metabolism, cell motility and immune modulation. Xenobiotics can act as ligands: upon xenobiotic-binding, activates the expression of multiple phase I and II xenobiotic chemical metabolizing enzyme genes (such as the CYP1A1 gene). Mediates biochemical and toxic effects of halogenated aromatic hydrocarbons. Next to xenobiotics, natural ligands derived from plants, microbiota, and endogenous metabolism are potent AHR agonists. Tryptophan (Trp) derivatives constitute an important class of endogenous AHR ligands. Acts as a negative regulator of anti-tumor immunity: indoles and kynurenic acid generated by Trp catabolism act as ligand and activate AHR, thereby promoting AHR-driven cancer cell motility and suppressing adaptive immunity. Regulates the circadian clock by inhibiting the basal and circadian expression of the core circadian component PER1. Inhibits PER1 by repressing the CLOCK-BMAL1 heterodimer mediated transcriptional activation of PER1. The heterodimer ARNT:AHR binds to core DNA sequence 5'-TGCGTG-3' within the dioxin response element (DRE) of target gene promoters and activates their transcription. This chain is Aryl hydrocarbon receptor (Ahr), found in Rattus norvegicus (Rat).